The following is a 347-amino-acid chain: D-alanine--D-alanine ligase (347 aa).

Residues 134–332 (KLYAKDLGVK…LAQSLPKTPK (199 aa)) enclose the ATP-grasp domain. 161–216 (LMNFNFPFIIKPNNAGSSLGVNVVKEEKELVYALDGAFEYSKEVLIEPFIQGVKEY) contributes to the ATP binding site. Positions 288, 300, and 302 each coordinate Mg(2+).

Belongs to the D-alanine--D-alanine ligase family. Mg(2+) serves as cofactor. The cofactor is Mn(2+).

It localises to the cytoplasm. The enzyme catalyses 2 D-alanine + ATP = D-alanyl-D-alanine + ADP + phosphate + H(+). The protein operates within cell wall biogenesis; peptidoglycan biosynthesis. Functionally, cell wall formation. In Helicobacter pylori (strain ATCC 700392 / 26695) (Campylobacter pylori), this protein is D-alanine--D-alanine ligase.